We begin with the raw amino-acid sequence, 199 residues long: Protein-methionine-sulfoxide reductase heme-binding subunit MsrQ (199 aa).

Transmembrane regions (helical) follow at residues 10 to 30 (WLKVCLHLAGFLPLLWLFWAI), 82 to 102 (LWCFVWATLHLTSYALLELGI), 116 to 136 (PYLTLGIISWLVLLALTLTST), and 153 to 173 (VVYLVAILAPIHYLWSVKILS).

It belongs to the MsrQ family. Heterodimer of a catalytic subunit (MsrP) and a heme-binding subunit (MsrQ). The cofactor is FMN. Heme b serves as cofactor.

It is found in the cell inner membrane. In terms of biological role, part of the MsrPQ system that repairs oxidized periplasmic proteins containing methionine sulfoxide residues (Met-O), using respiratory chain electrons. Thus protects these proteins from oxidative-stress damage caused by reactive species of oxygen and chlorine generated by the host defense mechanisms. MsrPQ is essential for the maintenance of envelope integrity under bleach stress, rescuing a wide series of structurally unrelated periplasmic proteins from methionine oxidation, including the primary periplasmic chaperone SurA and the lipoprotein Pal. MsrQ provides electrons for reduction to the reductase catalytic subunit MsrP, using the quinone pool of the respiratory chain. This Salmonella newport (strain SL254) protein is Protein-methionine-sulfoxide reductase heme-binding subunit MsrQ.